A 1118-amino-acid chain; its full sequence is Protein SUPPRESSOR OF NPR1-1 CONSTITUTIVE 4 (1118 aa).

An N-terminal signal peptide occupies residues 1 to 35; that stretch reads MNSQQSTRTKQMLQQSSTHLLCGVVLLQLFAAQVD. At 36 to 751 the chain is on the extracellular side; the sequence is AQRSTSPWQT…PLRNFLKVIR (716 aa). A GP-PDE 1 domain is found at 51 to 353; that stretch reads PLVIARGGFS…DFPLTASASV (303 aa). N-linked (GlcNAc...) asparagine glycosylation is found at Asn-106, Asn-195, Asn-251, Asn-260, Asn-318, Asn-335, Asn-362, Asn-422, Asn-433, Asn-497, Asn-557, Asn-573, and Asn-656. In terms of domain architecture, GP-PDE 2 spans 369-670; that stretch reads FLVISKNGAS…EFPYTAARYK (302 aa). A helical membrane pass occupies residues 752-772; that stretch reads IVSWSVAGVVLFLVLLTLVFC. Residues 773–1118 are Cytoplasmic-facing; sequence FHRKRETRLR…SEDVSVYTEG (346 aa). The Protein kinase domain occupies 805 to 1094; it reads KSFAEVVGRG…ALEVPPRPVL (290 aa). ATP-binding positions include 811–819 and Lys-833; that span reads VGRGGFGIV. The active-site Proton acceptor is Asp-928.

The protein in the N-terminal section; belongs to the glycerophosphoryl diester phosphodiesterase family. This sequence in the C-terminal section; belongs to the protein kinase superfamily. Ser/Thr protein kinase family. Expressed in shoots, rosette and cauline leaves, stems, flowers and siliques.

The protein localises to the cell membrane. The catalysed reaction is a sn-glycero-3-phosphodiester + H2O = an alcohol + sn-glycerol 3-phosphate + H(+). It catalyses the reaction L-seryl-[protein] + ATP = O-phospho-L-seryl-[protein] + ADP + H(+). It carries out the reaction L-threonyl-[protein] + ATP = O-phospho-L-threonyl-[protein] + ADP + H(+). Atypical receptor-like kinase involved in disease resistance. The sequence is that of Protein SUPPRESSOR OF NPR1-1 CONSTITUTIVE 4 from Arabidopsis thaliana (Mouse-ear cress).